The sequence spans 187 residues: Large ribosomal subunit protein uL22 (187 aa).

The protein belongs to the universal ribosomal protein uL22 family.

The polypeptide is Large ribosomal subunit protein uL22 (RPL17) (Theileria parva (East coast fever infection agent)).